Consider the following 440-residue polypeptide: Probable exopolygalacturonase B (440 aa).

The N-terminal stretch at 1 to 20 (MRLHFLPLVALCATTASSLA) is a signal peptide. 3 N-linked (GlcNAc...) asparagine glycosylation sites follow: Asn65, Asn190, and Asn230. Residue Asp260 is the Proton donor of the active site. The cysteines at positions 262 and 279 are disulfide-linked. 2 N-linked (GlcNAc...) asparagine glycosylation sites follow: Asn268 and Asn280. The active site involves His283. N-linked (GlcNAc...) asparagine glycans are attached at residues Asn307, Asn334, and Asn371. A disulfide bridge links Cys397 with Cys403. Asn412 carries N-linked (GlcNAc...) asparagine glycosylation.

The protein belongs to the glycosyl hydrolase 28 family.

It localises to the secreted. The enzyme catalyses [(1-&gt;4)-alpha-D-galacturonosyl](n) + H2O = alpha-D-galacturonate + [(1-&gt;4)-alpha-D-galacturonosyl](n-1). Specific in hydrolyzing the terminal glycosidic bond of polygalacturonic acid and oligogalacturonates. In Emericella nidulans (strain FGSC A4 / ATCC 38163 / CBS 112.46 / NRRL 194 / M139) (Aspergillus nidulans), this protein is Probable exopolygalacturonase B (pgxB).